A 750-amino-acid chain; its full sequence is Sulfhydryl oxidase 1 (750 aa).

An N-terminal signal peptide occupies residues 1-32 (MRRCGRHSGPPSLLLLLLLLPPLLLSVPGAYA). The 127-residue stretch at 33–159 (ARLSVLYSSS…RMRLIDALES (127 aa)) folds into the Thioredoxin domain. Active-site nucleophile residues include C73 and C76. 2 disulfides stabilise this stretch: C73-C76 and C104-C113. N133 and N246 each carry an N-linked (GlcNAc...) asparagine glycan. A disulfide bond links C396 and C408. The ERV/ALR sulfhydryl oxidase domain maps to 399–506 (SEPHFRGFPC…EDPQFPKVQW (108 aa)). FAD contacts are provided by residues R404, W411, H415, D454, H458, 481 to 488 (WTSHNRVN), K503, and W506. C452 and C455 are oxidised to a cystine. C512 and C515 are oxidised to a cystine. Disordered stretches follow at residues 545-567 (VRDP…ASPN) and 585-632 (EQAA…PEHT). Low complexity predominate over residues 587-597 (AASAASPGATA). The chain crosses the membrane as a helical span at residues 710 to 730 (FLDISLCVGLYSVSFMGLLAM).

The protein belongs to the quiescin-sulfhydryl oxidase (QSOX) family. In terms of assembly, monomer. The cofactor is FAD. N-glycosylated. O-glycosylated on Thr and Ser residues. Isoform 3: Detected in seminal vesicle fluid (at protein level). Isoform 1: Detected in brain, hypophysis, heart, testis and the seminal vesicle. Isoform 3: Highly expressed in the seminal vesicles followed by testis, heart, brain, thymus, hypophysis and lung. Also expressed in prostate, kidney, spleen, liver.

It is found in the golgi apparatus membrane. The protein resides in the secreted. The enzyme catalyses 2 R'C(R)SH + O2 = R'C(R)S-S(R)CR' + H2O2. Functionally, catalyzes the oxidation of sulfhydryl groups in peptide and protein thiols to disulfides with the reduction of oxygen to hydrogen peroxide. Plays a role in disulfide bond formation in a variety of extracellular proteins. In fibroblasts, required for normal incorporation of laminin into the extracellular matrix, and thereby for normal cell-cell adhesion and cell migration. In Rattus norvegicus (Rat), this protein is Sulfhydryl oxidase 1 (Qsox1).